The chain runs to 100 residues: Urease subunit gamma (100 aa).

This sequence belongs to the urease gamma subunit family. In terms of assembly, heterotrimer of UreA (gamma), UreB (beta) and UreC (alpha) subunits. Three heterotrimers associate to form the active enzyme.

The protein resides in the cytoplasm. The catalysed reaction is urea + 2 H2O + H(+) = hydrogencarbonate + 2 NH4(+). It functions in the pathway nitrogen metabolism; urea degradation; CO(2) and NH(3) from urea (urease route): step 1/1. In Alcanivorax borkumensis (strain ATCC 700651 / DSM 11573 / NCIMB 13689 / SK2), this protein is Urease subunit gamma.